A 681-amino-acid polypeptide reads, in one-letter code: Protein asunder (681 aa).

The interval 574 to 619 (PGASHLRSYTESPLSPERLEPTSSASNSSSSILKASKRRMSSSGQR) is disordered. The Nuclear localization signal (NLS) signature appears at 606 to 612 (LKASKRR).

Belongs to the Integrator subunit 13 family. In terms of assembly, belongs to the multiprotein complex Integrator, at least composed of IntS1, IntS2, IntS3, IntS4, omd/IntS5, IntS6, defl/IntS7, IntS8, IntS9, IntS10, IntS11, IntS12, asun/IntS13, IntS14 and IntS15. The core complex associates with protein phosphatase 2A subunits mts/PP2A and Pp2A-29B, to form the Integrator-PP2A (INTAC) complex. In terms of processing, phosphorylated.

It localises to the nucleus. It is found in the cytoplasm. Its subcellular location is the perinuclear region. Component of the integrator complex, a multiprotein complex that terminates RNA polymerase II (Pol II) transcription in the promoter-proximal region of genes. The integrator complex provides a quality checkpoint during transcription elongation by driving premature transcription termination of transcripts that are unfavorably configured for transcriptional elongation: the complex terminates transcription by (1) catalyzing dephosphorylation of the C-terminal domain (CTD) of Pol II subunit Polr2A/Rbp1 and Spt5, and (2) degrading the exiting nascent RNA transcript via endonuclease activity. The integrator complex is also involved in the 3'-end processing of the U7 snRNA, and also the spliceosomal snRNAs U1, U2, U4 and U5. The sequence is that of Protein asunder (asun) from Drosophila virilis (Fruit fly).